Consider the following 356-residue polypeptide: UDP-N-acetylglucosamine--N-acetylmuramyl-(pentapeptide) pyrophosphoryl-undecaprenol N-acetylglucosamine transferase (356 aa).

Residues 12 to 14 (TGG), N124, R163, S188, I242, and Q287 each bind UDP-N-acetyl-alpha-D-glucosamine.

This sequence belongs to the glycosyltransferase 28 family. MurG subfamily.

It is found in the cell inner membrane. The catalysed reaction is di-trans,octa-cis-undecaprenyl diphospho-N-acetyl-alpha-D-muramoyl-L-alanyl-D-glutamyl-meso-2,6-diaminopimeloyl-D-alanyl-D-alanine + UDP-N-acetyl-alpha-D-glucosamine = di-trans,octa-cis-undecaprenyl diphospho-[N-acetyl-alpha-D-glucosaminyl-(1-&gt;4)]-N-acetyl-alpha-D-muramoyl-L-alanyl-D-glutamyl-meso-2,6-diaminopimeloyl-D-alanyl-D-alanine + UDP + H(+). It functions in the pathway cell wall biogenesis; peptidoglycan biosynthesis. Its function is as follows. Cell wall formation. Catalyzes the transfer of a GlcNAc subunit on undecaprenyl-pyrophosphoryl-MurNAc-pentapeptide (lipid intermediate I) to form undecaprenyl-pyrophosphoryl-MurNAc-(pentapeptide)GlcNAc (lipid intermediate II). This is UDP-N-acetylglucosamine--N-acetylmuramyl-(pentapeptide) pyrophosphoryl-undecaprenol N-acetylglucosamine transferase from Pseudomonas syringae pv. syringae (strain B728a).